The following is a 428-amino-acid chain: MTVLAQGCDVAPPNNLTKPVRHESGQREVFCGLTGIVWLHRKIQDAFFLVVGSRTCAHLIQSAAGVMIFAEPRFATAIMEEKDLAGLTDANTELDRIVTQLLTRRPDIKLLFLVGSCPSEVIKLDLSRAALRLSQTFSPGVRILSYSGSGIETTFTQGEDACLASLVPELPAASGKDASLLVVGSMADVVEDQFVRMFEALGIGPVQFLPPRNSATLPSVGPNTKFLLAQPFLADTARELENRGATRLRAPFPLGVEGTTAWLRAAANAFAIDPALFDKVTQPARARAERALDNYRKELAGRRIFLFPDSQLEIPLARFLSRELGMQLVEVGTPYLHREHLAEELKLLPPDVQITEGQDVDLQLDRCRLARPDLVVCGLGLANPLEAEGMTTKWAIELVFTPIQGYEQASDLAELFARPLVRRAKLVA.

3 residues coordinate [4Fe-4S] cluster: C31, C56, and C117.

This sequence belongs to the BchN/ChlN family. As to quaternary structure, protochlorophyllide reductase is composed of three subunits; BchL, BchN and BchB. Forms a heterotetramer of two BchB and two BchN subunits. [4Fe-4S] cluster serves as cofactor.

It carries out the reaction chlorophyllide a + oxidized 2[4Fe-4S]-[ferredoxin] + 2 ADP + 2 phosphate = protochlorophyllide a + reduced 2[4Fe-4S]-[ferredoxin] + 2 ATP + 2 H2O. It participates in porphyrin-containing compound metabolism; bacteriochlorophyll biosynthesis (light-independent). Its function is as follows. Component of the dark-operative protochlorophyllide reductase (DPOR) that uses Mg-ATP and reduced ferredoxin to reduce ring D of protochlorophyllide (Pchlide) to form chlorophyllide a (Chlide). This reaction is light-independent. The NB-protein (BchN-BchB) is the catalytic component of the complex. The sequence is that of Light-independent protochlorophyllide reductase subunit N from Rhodopseudomonas palustris (strain BisB18).